The sequence spans 196 residues: uncharacterized protein (196 aa).

FAD-binding positions include 15 to 22, 68 to 71, tyrosine 107, and 123 to 126; these read SQGKFNKT, GWWM, and TWNA.

It belongs to the oxidoreductase MdaB family. Requires FAD as cofactor.

This is an uncharacterized protein from Schizosaccharomyces pombe (strain 972 / ATCC 24843) (Fission yeast).